The primary structure comprises 276 residues: Formamidopyrimidine-DNA glycosylase (276 aa).

The active-site Schiff-base intermediate with DNA is proline 2. The Proton donor role is filled by glutamate 3. The active-site Proton donor; for beta-elimination activity is the lysine 58. 3 residues coordinate DNA: histidine 92, arginine 111, and arginine 154. Residues histidine 239–valine 273 form an FPG-type zinc finger. Arginine 263 acts as the Proton donor; for delta-elimination activity in catalysis.

The protein belongs to the FPG family. In terms of assembly, monomer. It depends on Zn(2+) as a cofactor.

It carries out the reaction Hydrolysis of DNA containing ring-opened 7-methylguanine residues, releasing 2,6-diamino-4-hydroxy-5-(N-methyl)formamidopyrimidine.. The enzyme catalyses 2'-deoxyribonucleotide-(2'-deoxyribose 5'-phosphate)-2'-deoxyribonucleotide-DNA = a 3'-end 2'-deoxyribonucleotide-(2,3-dehydro-2,3-deoxyribose 5'-phosphate)-DNA + a 5'-end 5'-phospho-2'-deoxyribonucleoside-DNA + H(+). Functionally, involved in base excision repair of DNA damaged by oxidation or by mutagenic agents. Acts as a DNA glycosylase that recognizes and removes damaged bases. Has a preference for oxidized purines, such as 7,8-dihydro-8-oxoguanine (8-oxoG). Has AP (apurinic/apyrimidinic) lyase activity and introduces nicks in the DNA strand. Cleaves the DNA backbone by beta-delta elimination to generate a single-strand break at the site of the removed base with both 3'- and 5'-phosphates. This is Formamidopyrimidine-DNA glycosylase from Ligilactobacillus salivarius (strain UCC118) (Lactobacillus salivarius).